Reading from the N-terminus, the 212-residue chain is N-(5'-phosphoribosyl)anthranilate isomerase (212 aa).

Belongs to the TrpF family.

The catalysed reaction is N-(5-phospho-beta-D-ribosyl)anthranilate = 1-(2-carboxyphenylamino)-1-deoxy-D-ribulose 5-phosphate. The protein operates within amino-acid biosynthesis; L-tryptophan biosynthesis; L-tryptophan from chorismate: step 3/5. The chain is N-(5'-phosphoribosyl)anthranilate isomerase from Roseiflexus castenholzii (strain DSM 13941 / HLO8).